Here is a 60-residue protein sequence, read N- to C-terminus: Large ribosomal subunit protein bL32 (60 aa).

Residues 1-21 (MAVPARHTSKAKKNKRRTHYK) are disordered. Residues 7-20 (HTSKAKKNKRRTHY) show a composition bias toward basic residues.

Belongs to the bacterial ribosomal protein bL32 family.

This chain is Large ribosomal subunit protein bL32, found in Streptococcus equi subsp. zooepidemicus (strain H70).